Here is a 485-residue protein sequence, read N- to C-terminus: Probable cobyric acid synthase (485 aa).

The region spanning 250–435 (EVEIAVIRLP…LHGLFDNENI (186 aa)) is the GATase cobBQ-type domain. Residue Cys328 is the Nucleophile of the active site. Residue His427 is part of the active site.

The protein belongs to the CobB/CobQ family. CobQ subfamily.

Its pathway is cofactor biosynthesis; adenosylcobalamin biosynthesis. Its function is as follows. Catalyzes amidations at positions B, D, E, and G on adenosylcobyrinic A,C-diamide. NH(2) groups are provided by glutamine, and one molecule of ATP is hydrogenolyzed for each amidation. The protein is Probable cobyric acid synthase of Methanosarcina acetivorans (strain ATCC 35395 / DSM 2834 / JCM 12185 / C2A).